The sequence spans 71 residues: Translation initiation factor IF-1 (71 aa).

An S1-like domain is found at 1–71 (MSKDDLIQFT…LTKGRVIHRH (71 aa)).

The protein belongs to the IF-1 family. Component of the 30S ribosomal translation pre-initiation complex which assembles on the 30S ribosome in the order IF-2 and IF-3, IF-1 and N-formylmethionyl-tRNA(fMet); mRNA recruitment can occur at any time during PIC assembly.

The protein resides in the cytoplasm. Its function is as follows. One of the essential components for the initiation of protein synthesis. Stabilizes the binding of IF-2 and IF-3 on the 30S subunit to which N-formylmethionyl-tRNA(fMet) subsequently binds. Helps modulate mRNA selection, yielding the 30S pre-initiation complex (PIC). Upon addition of the 50S ribosomal subunit IF-1, IF-2 and IF-3 are released leaving the mature 70S translation initiation complex. This chain is Translation initiation factor IF-1, found in Rickettsia felis (strain ATCC VR-1525 / URRWXCal2) (Rickettsia azadi).